Reading from the N-terminus, the 430-residue chain is GPI mannosyltransferase 1 (430 aa).

Topologically, residues 1–11 are cytoplasmic; the sequence is MELQSLIDTVS. The helical transmembrane segment at 12 to 32 threads the bilayer; that stretch reads LQKLLLLGALLRLILIAYAFF. Over 33-72 the chain is Lumenal; the sequence is HDQWFRVKYTDIDYMIVVDGARHMWNGGSPFDRTTFRYTP. A helical transmembrane segment spans residues 73-93; the sequence is LLAALVMPSIWIANPMGKLIF. Over 94 to 115 the chain is Cytoplasmic; it reads ASSDLGAAWYCYGVLKSFAKER. A helical transmembrane segment spans residues 116 to 136; the sequence is SAKWMVSLFILFNPIVLSVST. At 137–163 the chain is on the lumenal side; that stretch reads RGNSDMLVTFMSLMVLSKFARRKCYQA. A helical membrane pass occupies residues 164–184; that stretch reads AAVLGFAVHFKIYPIIYALPL. Topologically, residues 185-206 are cytoplasmic; it reads TLGVWEQSVAASTNTWRRVVKT. A helical membrane pass occupies residues 207-227; that stretch reads AVVVSICALMAAISFAVPTVL. The Lumenal segment spans residues 228-360; sequence CYMKYGQQYL…AFKFFSWVKA (133 aa). A helical transmembrane segment spans residues 361–381; sequence LGVVLMWAATIPLWVTTAVPL. At 382-388 the chain is on the cytoplasmic side; the sequence is EFHGYSD. A helical membrane pass occupies residues 389–409; it reads FAQLWIVSCLFFLAMVVLASM. At 410 to 430 the chain is on the lumenal side; it reads LARIAYRVQCTKCSAKSIKVA.

This sequence belongs to the PIGM family.

Its subcellular location is the endoplasmic reticulum membrane. Its pathway is glycolipid biosynthesis; glycosylphosphatidylinositol-anchor biosynthesis. In terms of biological role, mannosyltransferase involved in glycosylphosphatidylinositol-anchor biosynthesis. Transfers the first alpha-1,4-mannose to GlcN-PI during GPI precursor assembly. This chain is GPI mannosyltransferase 1 (PIGM), found in Trypanosoma brucei brucei (strain 927/4 GUTat10.1).